Reading from the N-terminus, the 397-residue chain is Acetate kinase 2 (397 aa).

Asparagine 10 is a Mg(2+) binding site. Lysine 17 contributes to the ATP binding site. Residue arginine 90 participates in substrate binding. Aspartate 147 (proton donor/acceptor) is an active-site residue. Residues 207 to 211 (HLGNG), 281 to 283 (DAR), and 329 to 333 (GIGEN) contribute to the ATP site. Glutamate 385 contributes to the Mg(2+) binding site.

It belongs to the acetokinase family. In terms of assembly, homodimer. Mg(2+) serves as cofactor. Requires Mn(2+) as cofactor.

The protein localises to the cytoplasm. It catalyses the reaction acetate + ATP = acetyl phosphate + ADP. It functions in the pathway metabolic intermediate biosynthesis; acetyl-CoA biosynthesis; acetyl-CoA from acetate: step 1/2. Functionally, catalyzes the formation of acetyl phosphate from acetate and ATP. Can also catalyze the reverse reaction. This chain is Acetate kinase 2, found in Vibrio parahaemolyticus serotype O3:K6 (strain RIMD 2210633).